Consider the following 153-residue polypeptide: Prefoldin subunit alpha (153 aa).

Residues 126–153 (KRLEQGYRQAPGGSPVPHRHDHEDHDEE) are disordered. Over residues 143–153 (HRHDHEDHDEE) the composition is skewed to basic and acidic residues.

The protein belongs to the prefoldin alpha subunit family. Heterohexamer of two alpha and four beta subunits.

It is found in the cytoplasm. Functionally, molecular chaperone capable of stabilizing a range of proteins. Seems to fulfill an ATP-independent, HSP70-like function in archaeal de novo protein folding. This is Prefoldin subunit alpha from Methanoregula boonei (strain DSM 21154 / JCM 14090 / 6A8).